Consider the following 1100-residue polypeptide: Isoleucine--tRNA ligase (1100 aa).

The 'HIGH' region motif lies at 48-58 (PFATGLPHFGH). A 'KMSKS' region motif is present at residues 626–630 (KMSKS). K629 serves as a coordination point for ATP.

The protein belongs to the class-I aminoacyl-tRNA synthetase family. IleS type 2 subfamily. Monomer. Zn(2+) serves as cofactor.

It localises to the cytoplasm. The enzyme catalyses tRNA(Ile) + L-isoleucine + ATP = L-isoleucyl-tRNA(Ile) + AMP + diphosphate. Its function is as follows. Catalyzes the attachment of isoleucine to tRNA(Ile). As IleRS can inadvertently accommodate and process structurally similar amino acids such as valine, to avoid such errors it has two additional distinct tRNA(Ile)-dependent editing activities. One activity is designated as 'pretransfer' editing and involves the hydrolysis of activated Val-AMP. The other activity is designated 'posttransfer' editing and involves deacylation of mischarged Val-tRNA(Ile). The chain is Isoleucine--tRNA ligase from Treponema denticola (strain ATCC 35405 / DSM 14222 / CIP 103919 / JCM 8153 / KCTC 15104).